A 45-amino-acid chain; its full sequence is Pseudo-hevein (45 aa).

Positions 1–43 (EQCGRQAGGKLCPNNLCCSQYGWCGSSDDYCSPSKNCQSNCKG) constitute a Chitin-binding type-1 domain. Cystine bridges form between Cys-3–Cys-18, Cys-12–Cys-24, Cys-17–Cys-31, and Cys-37–Cys-41.

In terms of biological role, N-acetyl-D-glucosamine / N-acetyl-D-neuraminic acid binding lectin. Can inhibit fungal growth. This chain is Pseudo-hevein, found in Hevea brasiliensis (Para rubber tree).